Here is a 256-residue protein sequence, read N- to C-terminus: MKWKEQAIILGTRQYGETSVILEVMTRQHGRYMGVVKGGRSRRMAVLLQPGNFVEAEWWARLDEHLGLFRLEALDLHAARLILFPEALYALQLIVFHLHLLPERDPHPILYDILHLFMQSFDEPFINAELLVRFEMRFLEELGFGLDLSRCAATGRLEKLCYVSPKSGRAVCEEAGHPWREKLLNLPQFLVQRTVRPVDFSDIKNGFILTGFFLMRHVWEPRNIKQPSVRISLIQLFEQRFRMQASFVDLKTINRM.

It belongs to the RecO family.

Functionally, involved in DNA repair and RecF pathway recombination. The protein is DNA repair protein RecO of Bartonella henselae (strain ATCC 49882 / DSM 28221 / CCUG 30454 / Houston 1) (Rochalimaea henselae).